Reading from the N-terminus, the 566-residue chain is Lactase-like protein (566 aa).

The first 20 residues, 1–20 (MKPVWVIILGWILLVPRVGT), serve as a signal peptide directing secretion. At 21-540 (AWRGPPEEAS…LLRHMHVASE (520 aa)) the chain is on the extracellular side. N170 and N244 each carry an N-linked (GlcNAc...) asparagine glycan. A helical transmembrane segment spans residues 541–561 (IVVPTVCALSILTAALMLTLL). The Cytoplasmic portion of the chain corresponds to 562–566 (LRRRG).

The protein belongs to the glycosyl hydrolase 1 family. Klotho subfamily. May form dimers. As to expression, strongly expressed in the lens of the eye, where it localizes to the equatorial epithelium and outer layers of newly extending fiber cells (at protein level). May also be expressed in kidney and skin. However, another study suggests that expression is specific to eye and is minimal in other tissues.

Its subcellular location is the endoplasmic reticulum membrane. Plays a role in formation of the lens suture in the eye, which is important for normal optical properties of the lens. The chain is Lactase-like protein (Lctl) from Mus musculus (Mouse).